An 84-amino-acid polypeptide reads, in one-letter code: Putative glutaredoxin MT3292 (84 aa).

Residues 1–84 (MITAALTIYT…VKAKLVKIAG (84 aa)) form the Glutaredoxin domain.

The chain is Putative glutaredoxin MT3292 from Mycobacterium tuberculosis (strain CDC 1551 / Oshkosh).